The sequence spans 380 residues: Transporter PPE51 (380 aa).

An N-acetylmethionine modification is found at methionine 1.

It belongs to the mycobacterial PPE family. As to quaternary structure, interacts with PE19 and PE25.

The protein resides in the cell outer membrane. Its function is as follows. Small molecule-selective channel required for the uptake of nutrients across the outer mycomembrane. Transports glycerol and glucose. Involved in sensitivity to M.tuberculosis growth inhibitory agrichemical 3,3-bis-di(methylsulfonyl)propionamide (3bMP1). Transports maltose and lactose disaccharides. Involved in sensitivity to bactericidal thio-disaccharide T-6 compound (1,6-anhydro-3-deoxy-4-S-(2,3,4,6-tetra-O-acetyl-beta-D-glucopyranosyl)-D-glycero-hexopyranos-2-ulose). Transports extracellular trehalose, a component of the cell envelope, and trehalose analog, 6-azido trehalose (6-TreAz), which has antimycobacterial activity. Functionally, plays a role in response to starvation and stress, likely environment within the host. Inhibits canonical autophagy in infected mouse RAW264.7 macrophages. Inhibits autophagy and enhances intracellular bacterial survival when expressed in human macrophage-like THP-1 cells. Inhibits Toll-like receptor 2 (TLR2)-dependent signaling leading to autophagy inhibition, increased intracellular bacterial survival, reduced phagocytosis and reduced secretion of interleukin 6 (IL-6) and IL-1 in infected mouse primary bone marrow-derived macrophage (BMDM) cells. Required for virulence and persistence in the lungs and spleens of intranasally infected C57BL/6J mice. Blocks the antibacterial effects of TLR2 activation, suppresses MHC class II-dependent antigen presentation, and reduces IFN-gamma and TNF-alpha-producing CD4(+) T cells during infection in C57BL/6J mice. In Mycobacterium tuberculosis (strain CDC 1551 / Oshkosh), this protein is Transporter PPE51 (PPE51).